A 326-amino-acid polypeptide reads, in one-letter code: tRNA uridine(34) hydroxylase (326 aa).

Residues 123–217 (SDPDVLLVDT…YLEEVPEENS (95 aa)) enclose the Rhodanese domain. The active-site Cysteine persulfide intermediate is C177. Basic and acidic residues predominate over residues 276–320 (EEQKSRFREREKQVQLANERGETHVGGDAAKLIEQRKQEKKEKKQ). Residues 276–326 (EEQKSRFREREKQVQLANERGETHVGGDAAKLIEQRKQEKKEKKQQQRSSK) form a disordered region.

Belongs to the TrhO family.

The enzyme catalyses uridine(34) in tRNA + AH2 + O2 = 5-hydroxyuridine(34) in tRNA + A + H2O. Catalyzes oxygen-dependent 5-hydroxyuridine (ho5U) modification at position 34 in tRNAs. This is tRNA uridine(34) hydroxylase from Aliivibrio salmonicida (strain LFI1238) (Vibrio salmonicida (strain LFI1238)).